Reading from the N-terminus, the 381-residue chain is Chaperone protein DnaJ (381 aa).

A J domain is found at 5-70 (DFYEVLGVGR…QKKAAYDQYG (66 aa)). The segment at 136-214 (GCSKEIEVPT…CHGQGRKQKT (79 aa)) adopts a CR-type zinc-finger fold. Zn(2+) contacts are provided by Cys-149, Cys-152, Cys-166, Cys-169, Cys-188, Cys-191, Cys-202, and Cys-205. CXXCXGXG motif repeat units follow at residues 149–156 (CDACDGSG), 166–173 (CGTCHGHG), 188–195 (CPTCHGKG), and 202–209 (CNVCHGQG).

The protein belongs to the DnaJ family. In terms of assembly, homodimer. The cofactor is Zn(2+).

It is found in the cytoplasm. Its function is as follows. Participates actively in the response to hyperosmotic and heat shock by preventing the aggregation of stress-denatured proteins and by disaggregating proteins, also in an autonomous, DnaK-independent fashion. Unfolded proteins bind initially to DnaJ; upon interaction with the DnaJ-bound protein, DnaK hydrolyzes its bound ATP, resulting in the formation of a stable complex. GrpE releases ADP from DnaK; ATP binding to DnaK triggers the release of the substrate protein, thus completing the reaction cycle. Several rounds of ATP-dependent interactions between DnaJ, DnaK and GrpE are required for fully efficient folding. Also involved, together with DnaK and GrpE, in the DNA replication of plasmids through activation of initiation proteins. This is Chaperone protein DnaJ from Vibrio cholerae serotype O1 (strain ATCC 39541 / Classical Ogawa 395 / O395).